Here is a 410-residue protein sequence, read N- to C-terminus: Mating-type locus allele B1 protein (410 aa).

Residues 1 to 110 are variable domain between B alleles; it reads MSSDPNFSLI…FNVVSPDVGC (110 aa). Positions 107 to 184 form a DNA-binding region, homeobox; TALE-type; it reads DVGCRNLSED…NARRRSGWSH (78 aa). A highly conserved between B alleles region spans residues 111 to 410; sequence RNLSEDLPAY…PFLCLSVAFV (300 aa). Disordered stretches follow at residues 202-239, 278-335, and 374-395; these read RAKLSSSNQSTPPSSTSDSLSNNLDDVLSDNLGRPLTP, TPKP…TPEL, and ARGNRKVKALPKRAGKQQPDEV. A compositionally biased stretch (low complexity) spans 205–233; the sequence is LSSSNQSTPPSSTSDSLSNNLDDVLSDNL. Positions 276–308 match the Nuclear localization signal motif; sequence KKTPKPGMPRPVTTVAKRHPARKTKPAAKPKSR. Basic residues predominate over residues 291–307; it reads AKRHPARKTKPAAKPKS. Residues 312–335 show a composition bias toward polar residues; the sequence is PRASTTPSIDSTLDSSKLESTPEL. A not essential for B1 function region spans residues 333-410; that stretch reads PELSMCSTAD…PFLCLSVAFV (78 aa). Basic residues predominate over residues 375–388; that stretch reads RGNRKVKALPKRAG.

This sequence belongs to the TALE/M-ATYP homeobox family.

The protein resides in the nucleus. The B locus has at least 25 alleles, and any combination of two different B alleles yields a multimeric regulatory protein, that activates genes responsible for the pathogenicity and for the sexual development of the fungus within the corn plant. This chain is Mating-type locus allele B1 protein, found in Mycosarcoma maydis (Corn smut fungus).